We begin with the raw amino-acid sequence, 200 residues long: Pyridoxal 5'-phosphate synthase subunit PdxT (200 aa).

52-54 (GES) is a binding site for L-glutamine. The active-site Nucleophile is Cys-84. L-glutamine contacts are provided by residues Arg-116 and 145–146 (IR). Active-site charge relay system residues include His-181 and Glu-183.

The protein belongs to the glutaminase PdxT/SNO family. In the presence of PdxS, forms a dodecamer of heterodimers. Only shows activity in the heterodimer.

The enzyme catalyses aldehydo-D-ribose 5-phosphate + D-glyceraldehyde 3-phosphate + L-glutamine = pyridoxal 5'-phosphate + L-glutamate + phosphate + 3 H2O + H(+). The catalysed reaction is L-glutamine + H2O = L-glutamate + NH4(+). Its pathway is cofactor biosynthesis; pyridoxal 5'-phosphate biosynthesis. Functionally, catalyzes the hydrolysis of glutamine to glutamate and ammonia as part of the biosynthesis of pyridoxal 5'-phosphate. The resulting ammonia molecule is channeled to the active site of PdxS. This chain is Pyridoxal 5'-phosphate synthase subunit PdxT, found in Saccharolobus islandicus (strain Y.N.15.51 / Yellowstone #2) (Sulfolobus islandicus).